The following is a 397-amino-acid chain: Phosphoglycerate kinase (397 aa).

Residues 21-23, R37, 60-63, R119, and R152 each bind substrate; these read DFN and HLGR. ATP is bound by residues K203, G294, E325, and 354–357; that span reads GGDS.

This sequence belongs to the phosphoglycerate kinase family. As to quaternary structure, monomer.

It localises to the cytoplasm. It catalyses the reaction (2R)-3-phosphoglycerate + ATP = (2R)-3-phospho-glyceroyl phosphate + ADP. The protein operates within carbohydrate degradation; glycolysis; pyruvate from D-glyceraldehyde 3-phosphate: step 2/5. This is Phosphoglycerate kinase from Chlorobium luteolum (strain DSM 273 / BCRC 81028 / 2530) (Pelodictyon luteolum).